The primary structure comprises 835 residues: MLEEPIDALETEFENALNSLEDNQLSKINGQLPEQVHVFPLLRRPFFPGMAAPLVIEPGPFYEVLKVVAKSDHKCVGLVLTRSEQAEIYKVGFSDLYQIGVLARVLRIIPMEQGGAQVILNMERRIKIEKPTSETKTLKANVSYIEDDPILTTELKAYAISILSTIKELLKLNPLFKEELQIFLGHSDFTEPGKLADFAVALTTASREELQDVLETFDIRKRIDKALILLKKELDISILQHNINQKIEATINKSQKDFFLREQLKTIKKELGIERDDKSLDREKFEARLKERVVPSDVMKVITEELEKLSVLDMQSAEYSVVRGYLDWLTTIPWGIYSQENHNLEEAEKILAHDHYGLEDIKQRILEFIGVGKLAKGVRGSIICLVGPPGVGKTSIGKSIARALNRKFYRFSVGGMRDEAEIKGHRRTYVGAMPGKMIQALKYCQTMNPVIMLDEVDKMGKSFQGDPASALLEVLDPEQNAEFLDHYLDVRCNLSEVLFIVTANVLDTIPEPLKDRMDILRLSGYIMQEKLEIAKKYLIPRNRKEMGLKALEVSFTQEALRSIINGYARESGVRNLENLLKKILRKLAVNIVREQEEHDKEQAKKKKSSRSKKPIAFVPTKHSITPSNLKDFLGKPVFTSDRFYERTPVGVCMGLAWTAMGGATLYIESIKVAGEKTVMKLTGQAGDVMKESAEIAWSYVHSSIHKYAPGYTFFEKSQVHIHIPEGATPKDGPSAGITMVTSLLSLILDTPVLDNLGMTGELTLTGRVLPIGGVKEKLVAARRSGLKVLIFPKDNLRDYEELPEYIRKGITVHFVDHYDQVFKISFPNKHQMKLC.

Residues 36-234 enclose the Lon N-terminal domain; that stretch reads VHVFPLLRRP…KALILLKKEL (199 aa). 387 to 394 serves as a coordination point for ATP; that stretch reads GPPGVGKT. The Lon proteolytic domain occupies 646-828; that stretch reads RTPVGVCMGL…DQVFKISFPN (183 aa). Residues Ser-734 and Lys-777 contribute to the active site.

This sequence belongs to the peptidase S16 family. As to quaternary structure, homohexamer. Organized in a ring with a central cavity.

The protein resides in the cytoplasm. The catalysed reaction is Hydrolysis of proteins in presence of ATP.. ATP-dependent serine protease that mediates the selective degradation of mutant and abnormal proteins as well as certain short-lived regulatory proteins. Required for cellular homeostasis and for survival from DNA damage and developmental changes induced by stress. Degrades polypeptides processively to yield small peptide fragments that are 5 to 10 amino acids long. Binds to DNA in a double-stranded, site-specific manner. The polypeptide is Lon protease (Protochlamydia amoebophila (strain UWE25)).